We begin with the raw amino-acid sequence, 194 residues long: Peptidyl-tRNA hydrolase (194 aa).

Residue Tyr-17 participates in tRNA binding. Catalysis depends on His-22, which acts as the Proton acceptor. TRNA contacts are provided by Phe-68, Asn-70, and Asn-116.

The protein belongs to the PTH family. In terms of assembly, monomer.

The protein localises to the cytoplasm. The catalysed reaction is an N-acyl-L-alpha-aminoacyl-tRNA + H2O = an N-acyl-L-amino acid + a tRNA + H(+). Functionally, hydrolyzes ribosome-free peptidyl-tRNAs (with 1 or more amino acids incorporated), which drop off the ribosome during protein synthesis, or as a result of ribosome stalling. Its function is as follows. Catalyzes the release of premature peptidyl moieties from peptidyl-tRNA molecules trapped in stalled 50S ribosomal subunits, and thus maintains levels of free tRNAs and 50S ribosomes. The protein is Peptidyl-tRNA hydrolase of Actinobacillus succinogenes (strain ATCC 55618 / DSM 22257 / CCUG 43843 / 130Z).